The primary structure comprises 174 residues: uncharacterized protein (174 aa).

This is an uncharacterized protein from Archaeoglobus fulgidus (strain ATCC 49558 / DSM 4304 / JCM 9628 / NBRC 100126 / VC-16).